The sequence spans 222 residues: MAYDSDYTFPDPETSDKQGLLAIGGVLTPKRVLQAYSQGIFPWYEPGNPVLWWSPNPRLILIPNEFKISRSLKKTLKKPFKLTVDTAFQRVISYCATCSDRTNKTWITSEMIETYTQLHEMGYAHSFEIWDGSELVGGLYGISLGHAFFGESMFHTITDASKVALHFLCSIMQSWNFDFIDCQLPTLHLMRLGAKIISRKEFLHMLQETLKYPDKKGNWSVD.

This sequence belongs to the L/F-transferase family.

It is found in the cytoplasm. The enzyme catalyses N-terminal L-lysyl-[protein] + L-leucyl-tRNA(Leu) = N-terminal L-leucyl-L-lysyl-[protein] + tRNA(Leu) + H(+). It carries out the reaction N-terminal L-arginyl-[protein] + L-leucyl-tRNA(Leu) = N-terminal L-leucyl-L-arginyl-[protein] + tRNA(Leu) + H(+). The catalysed reaction is L-phenylalanyl-tRNA(Phe) + an N-terminal L-alpha-aminoacyl-[protein] = an N-terminal L-phenylalanyl-L-alpha-aminoacyl-[protein] + tRNA(Phe). In terms of biological role, functions in the N-end rule pathway of protein degradation where it conjugates Leu, Phe and, less efficiently, Met from aminoacyl-tRNAs to the N-termini of proteins containing an N-terminal arginine or lysine. This is Leucyl/phenylalanyl-tRNA--protein transferase from Legionella pneumophila (strain Paris).